The chain runs to 495 residues: UDP-N-acetylmuramoyl-L-alanyl-D-glutamate--2,6-diaminopimelate ligase (495 aa).

Residues leucine 27, serine 29, and 44-46 (HQA) each bind UDP-N-acetyl-alpha-D-muramoyl-L-alanyl-D-glutamate. 116-122 (GTNGKTT) is a binding site for ATP. Residues asparagine 157, 158–159 (TT), serine 185, glutamine 191, and arginine 193 each bind UDP-N-acetyl-alpha-D-muramoyl-L-alanyl-D-glutamate. Lysine 225 carries the post-translational modification N6-carboxylysine. Meso-2,6-diaminopimelate contacts are provided by residues arginine 390, 414–417 (DNPR), glycine 465, and glutamate 469. The Meso-diaminopimelate recognition motif signature appears at 414–417 (DNPR).

The protein belongs to the MurCDEF family. MurE subfamily. Requires Mg(2+) as cofactor. Post-translationally, carboxylation is probably crucial for Mg(2+) binding and, consequently, for the gamma-phosphate positioning of ATP.

It is found in the cytoplasm. It carries out the reaction UDP-N-acetyl-alpha-D-muramoyl-L-alanyl-D-glutamate + meso-2,6-diaminopimelate + ATP = UDP-N-acetyl-alpha-D-muramoyl-L-alanyl-gamma-D-glutamyl-meso-2,6-diaminopimelate + ADP + phosphate + H(+). It participates in cell wall biogenesis; peptidoglycan biosynthesis. Functionally, catalyzes the addition of meso-diaminopimelic acid to the nucleotide precursor UDP-N-acetylmuramoyl-L-alanyl-D-glutamate (UMAG) in the biosynthesis of bacterial cell-wall peptidoglycan. The protein is UDP-N-acetylmuramoyl-L-alanyl-D-glutamate--2,6-diaminopimelate ligase of Salmonella paratyphi A (strain ATCC 9150 / SARB42).